The following is a 423-amino-acid chain: 5-hydroxytryptamine receptor 1A-alpha (423 aa).

Residues 1-47 (MDLRATSSNDSNATSGYSDTAAVDWDEGENATGSGSLPDPELSYQII) are Extracellular-facing. 3 N-linked (GlcNAc...) asparagine glycosylation sites follow: Asn9, Asn12, and Asn30. A helical membrane pass occupies residues 48–68 (TSLFLGALILCSIFGNSCVVA). Over 69–82 (AIALERSLQNVANY) the chain is Cytoplasmic. Residues 83–107 (LIGSLAVTDLMVSVLVLPMAALYQV) traverse the membrane as a helical segment. Over 108–116 (LNKWTLGQD) the chain is Extracellular. Residues 117 to 141 (ICDLFIALDVLCCTSSILHLCAIAL) traverse the membrane as a helical segment. A disulfide bond links Cys118 and Cys196. 2 residues coordinate serotonin: Asp125 and Cys129. Positions 142 to 144 (DRY) match the DRY motif; important for ligand-induced conformation changes motif. Residues 142-161 (DRYWAITDPIDYVNKRTPRR) are Cytoplasmic-facing. Residues 162–183 (AAVLISVTWLIGFSISIPPMLG) form a helical membrane-spanning segment. The Extracellular portion of the chain corresponds to 184 to 202 (WRSAEDRANPDACIISQDP). The helical transmembrane segment at 203–225 (GYTIYSTFGAFYIPLILMLVLYG) threads the bilayer. Residues 226–347 (RIFKAARFRI…LARERKTVKT (122 aa)) are Cytoplasmic-facing. A disordered region spans residues 311-332 (LPLPNTPQSSSHENINEKTTGT). The span at 316-329 (TPQSSSHENINEKT) shows a compositional bias: polar residues. Ser320, Lys346, Thr347, and Gly353 together coordinate 1D-myo-inositol 4-phosphate. The chain crosses the membrane as a helical span at residues 348-371 (LGIIMGTFIFCWLPFFIVALVLPF). At 372–379 (CAENCYMP) the chain is on the extracellular side. Residues 380–404 (EWLGAVINWLGYSNSLLNPIIYAYF) traverse the membrane as a helical segment. The NPxxY motif; important for ligand-induced conformation changes and signaling signature appears at 397-401 (NPIIY). Residues Phe404, Asn405, and Lys406 each contribute to the 1D-myo-inositol 4-phosphate site. Over 405 to 423 (NKDFQSAFKKILRCKFHRH) the chain is Cytoplasmic.

The protein belongs to the G-protein coupled receptor 1 family. 5-hydroxytryptamine receptor subfamily.

Its subcellular location is the cell membrane. G-protein coupled receptor activity is regulated by lipids: phosphatidylinositol 4-phosphate increases HTR1A-mediated activity. G-protein coupled receptor for 5-hydroxytryptamine (serotonin). Also functions as a receptor for various drugs and psychoactive substances. Ligand binding causes a conformation change that triggers signaling via guanine nucleotide-binding proteins (G proteins) and modulates the activity of downstream effectors, such as adenylate cyclase. HTR1A is coupled to G(i)/G(o) G alpha proteins and mediates inhibitory neurotransmission: signaling inhibits adenylate cyclase activity and activates a phosphatidylinositol-calcium second messenger system that regulates the release of Ca(2+) ions from intracellular stores. Beta-arrestin family members regulate signaling by mediating both receptor desensitization and resensitization processes. The polypeptide is 5-hydroxytryptamine receptor 1A-alpha (htr1aa) (Takifugu rubripes (Japanese pufferfish)).